Here is a 63-residue protein sequence, read N- to C-terminus: Keratin-associated protein 8-1 (63 aa).

Residues 12–54 (PGCYWGSYGYPLGYSVGCGYGSTYSPVGYGFGYGYNGCGAFGY) are 12 X 2 AA repeats of G-[YCGS].

The protein belongs to the KRTAP type 8 family. As to quaternary structure, interacts with hair keratins. In terms of tissue distribution, is essentially restricted to only one vertical half of the hair forming compartment and in beard hairs is absent from the central medulla.

Its function is as follows. In the hair cortex, hair keratin intermediate filaments are embedded in an interfilamentous matrix, consisting of hair keratin-associated proteins (KRTAP), which are essential for the formation of a rigid and resistant hair shaft through their extensive disulfide bond cross-linking with abundant cysteine residues of hair keratins. The matrix proteins include the high-sulfur and high-glycine-tyrosine keratins. This chain is Keratin-associated protein 8-1 (KRTAP8-1), found in Homo sapiens (Human).